A 285-amino-acid polypeptide reads, in one-letter code: MSRSVLQGFWLLMRADKPVGSYLLLWPTLWALMIAAQGLPPWHITGIFMAGVFVMRSAGCVINDYADRKVDGKVDRTKARPLVSGVVTEKQALGLFATLVGVAFLLVLALNWQTIVLSLGALALASVYPFMKRYTHFPQVVLGAAFGWAIPMAFMAVTEAVPAIAWWLFAINVLWTVAYDTQYAMVDRNDDLQIGVKSTAVLFGQYDRLIIGLLQLSVVVMLLGMGQYLGFTLSFYVGVLLASVLFIHQQRLISGRARQACFSAFLNNNYVGMAIALGIAGHYFM.

7 helical membrane passes run 20–39, 92–112, 137–157, 159–179, 206–226, 228–248, and 260–280; these read GSYLLLWPTLWALMIAAQGL, ALGLFATLVGVAFLLVLALNW, FPQVVLGAAFGWAIPMAFMAV, EAVPAIAWWLFAINVLWTVAY, YDRLIIGLLQLSVVVMLLGMG, YLGFTLSFYVGVLLASVLFIH, and ACFSAFLNNNYVGMAIALGIA.

It belongs to the UbiA prenyltransferase family. It depends on Mg(2+) as a cofactor.

The protein localises to the cell inner membrane. The catalysed reaction is all-trans-octaprenyl diphosphate + 4-hydroxybenzoate = 4-hydroxy-3-(all-trans-octaprenyl)benzoate + diphosphate. It functions in the pathway cofactor biosynthesis; ubiquinone biosynthesis. Its function is as follows. Catalyzes the prenylation of para-hydroxybenzoate (PHB) with an all-trans polyprenyl group. Mediates the second step in the final reaction sequence of ubiquinone-8 (UQ-8) biosynthesis, which is the condensation of the polyisoprenoid side chain with PHB, generating the first membrane-bound Q intermediate 3-octaprenyl-4-hydroxybenzoate. This Pseudoalteromonas atlantica (strain T6c / ATCC BAA-1087) protein is 4-hydroxybenzoate octaprenyltransferase.